The sequence spans 62 residues: Conotoxin TxIC (62 aa).

Residues 1 to 22 (MHCLPIFVILLLLTASGPSVDA) form the signal peptide. Residues 23-47 (QLKTKDDVPLSSFRDHAKSTLRRLQ) constitute a propeptide that is removed on maturation. Intrachain disulfides connect Cys-52–Cys-58 and Cys-53–Cys-61. Pro-60 is subject to 4-hydroxyproline. Cys-61 carries the cysteine amide modification.

It belongs to the conotoxin A superfamily. Expressed by the venom duct.

It localises to the secreted. The protein is Conotoxin TxIC of Conus textile (Cloth-of-gold cone).